A 61-amino-acid polypeptide reads, in one-letter code: Photosystem II reaction center X protein (61 aa).

A helical transmembrane segment spans residues 26–46; it reads IGSFIAAALLIVIPATAFLIF.

This sequence belongs to the PsbX family. Type 2 subfamily. As to quaternary structure, PSII consists of a core antenna complex that captures photons, and an electron transfer chain that converts photonic excitation into a charge separation. PSII forms dimeric complexes.

It localises to the cellular thylakoid membrane. In terms of biological role, involved in the binding and/or turnover of quinones at the Q(B) site of Photosystem II. The protein is Photosystem II reaction center X protein of Prochlorococcus marinus (strain MIT 9215).